We begin with the raw amino-acid sequence, 483 residues long: UDP-N-acetylmuramoyl-L-alanyl-D-glutamate--2,6-diaminopimelate ligase (483 aa).

Serine 30 is a binding site for UDP-N-acetyl-alpha-D-muramoyl-L-alanyl-D-glutamate. Glycine 109–threonine 115 is a binding site for ATP. UDP-N-acetyl-alpha-D-muramoyl-L-alanyl-D-glutamate-binding positions include threonine 151–threonine 152, serine 178, and arginine 186. At lysine 218 the chain carries N6-carboxylysine. Residues arginine 380, aspartate 403–arginine 406, glycine 453, and glutamate 457 contribute to the meso-2,6-diaminopimelate site. The short motif at aspartate 403–arginine 406 is the Meso-diaminopimelate recognition motif element.

The protein belongs to the MurCDEF family. MurE subfamily. It depends on Mg(2+) as a cofactor. Carboxylation is probably crucial for Mg(2+) binding and, consequently, for the gamma-phosphate positioning of ATP.

It is found in the cytoplasm. It catalyses the reaction UDP-N-acetyl-alpha-D-muramoyl-L-alanyl-D-glutamate + meso-2,6-diaminopimelate + ATP = UDP-N-acetyl-alpha-D-muramoyl-L-alanyl-gamma-D-glutamyl-meso-2,6-diaminopimelate + ADP + phosphate + H(+). The protein operates within cell wall biogenesis; peptidoglycan biosynthesis. Catalyzes the addition of meso-diaminopimelic acid to the nucleotide precursor UDP-N-acetylmuramoyl-L-alanyl-D-glutamate (UMAG) in the biosynthesis of bacterial cell-wall peptidoglycan. This is UDP-N-acetylmuramoyl-L-alanyl-D-glutamate--2,6-diaminopimelate ligase from Chlamydia trachomatis serovar A (strain ATCC VR-571B / DSM 19440 / HAR-13).